The primary structure comprises 108 residues: DNA-directed RNA polymerase subunit omega (108 aa).

The interval 1–32 is disordered; the sequence is MTNSQSDAALAAVPDRFDPSAGGPGAYDTPLG.

This sequence belongs to the RNA polymerase subunit omega family. In terms of assembly, the RNAP catalytic core consists of 2 alpha, 1 beta, 1 beta' and 1 omega subunit. When a sigma factor is associated with the core the holoenzyme is formed, which can initiate transcription.

The catalysed reaction is RNA(n) + a ribonucleoside 5'-triphosphate = RNA(n+1) + diphosphate. In terms of biological role, promotes RNA polymerase assembly. Latches the N- and C-terminal regions of the beta' subunit thereby facilitating its interaction with the beta and alpha subunits. The polypeptide is DNA-directed RNA polymerase subunit omega (Mycobacterium avium (strain 104)).